The primary structure comprises 581 residues: MRARQFFISTLKEAPADAEVVSQKLMLRAGMIRKVAAGIYNYLPMGLKSIRKVENIIREEMNRAGALELTMPLVQPSELWQETGRWDKMGPEMLRFKDRHERDFALQPTSEEVVTDIARQELKSYRQLPKNFYQIQTKFRDERRPRFGVMRGREFTMKDAYSFDRSAEAAGESYDAMYAAYSRIFDRLGLTYRAVAADTGAIGGDRSHEFQVIADTGEDAIVYCPDSSYAANIELAEALSLLPARAGASAPLAKTPTPGKSTCEDVAALLGVPLASTVKSLVLATDDEDESGKVVKSTVWLLLVRGDHELNEVKAGKIEGLKAGFRFATEAEILDHFGCKPGYLGPIGLAQPVKVIADRTVANMADFVCGANAEDFHYTGANWGRDLPEPDLVADIRNVVEGDPSPDGKGKLAIQRGIEVGHVFYLGTKYSKAMNATFLDVDGKPKHFEMGCYGIGVTRILGAAIEQNHDERGIIWPASIAPFEVVICPVGWSKSEAVRDEAQKLYDALVAAGVDVILDDRDERPGVMFADWELIGVPHRVTIGDRGLKEGVAEYQGRRDPEASRVAVAEIAPHLISRLRP.

The protein belongs to the class-II aminoacyl-tRNA synthetase family. ProS type 1 subfamily. In terms of assembly, homodimer.

It is found in the cytoplasm. The catalysed reaction is tRNA(Pro) + L-proline + ATP = L-prolyl-tRNA(Pro) + AMP + diphosphate. In terms of biological role, catalyzes the attachment of proline to tRNA(Pro) in a two-step reaction: proline is first activated by ATP to form Pro-AMP and then transferred to the acceptor end of tRNA(Pro). As ProRS can inadvertently accommodate and process non-cognate amino acids such as alanine and cysteine, to avoid such errors it has two additional distinct editing activities against alanine. One activity is designated as 'pretransfer' editing and involves the tRNA(Pro)-independent hydrolysis of activated Ala-AMP. The other activity is designated 'posttransfer' editing and involves deacylation of mischarged Ala-tRNA(Pro). The misacylated Cys-tRNA(Pro) is not edited by ProRS. The protein is Proline--tRNA ligase of Azoarcus sp. (strain BH72).